The following is a 137-amino-acid chain: Glutamate mutase sigma subunit (137 aa).

The B12-binding domain maps to 3–137 (KKTIVLGVIG…ADMKEVLGVE (135 aa)). Adenosylcob(III)alamin-binding positions include 13–17 (SDCHA), His16, 61–63 (SSL), and 93–97 (NIVVG).

This sequence belongs to the methylaspartate mutase GlmS subunit family. Heterotetramer composed of 2 epsilon subunits (GlmE) and 2 sigma subunits (GlmS). GlmE exists as a homodimer and GlmS as a monomer. Adenosylcob(III)alamin is required as a cofactor.

It catalyses the reaction (2S,3S)-3-methyl-L-aspartate = L-glutamate. It participates in amino-acid degradation; L-glutamate degradation via mesaconate pathway; acetate and pyruvate from L-glutamate: step 1/4. Catalyzes the carbon skeleton rearrangement of L-glutamate to L-threo-3-methylaspartate ((2S,3S)-3-methylaspartate). The protein is Glutamate mutase sigma subunit of Clostridium tetanomorphum.